Here is a 636-residue protein sequence, read N- to C-terminus: p-hydroxybenzoate-m-hydroxylase (636 aa).

Residues 11–40, 242–244, Tyr-290, and Asp-311 contribute to the FAD site; these read DIVI…HIDN and RLY. The chain crosses the membrane as a helical span at residues 12-33; the sequence is IVIVGAGPVGILLSLCMSRWGY. A glycan (N-linked (GlcNAc...) asparagine) is linked at Asn-573.

The protein belongs to the PheA/TfdB FAD monooxygenase family. Requires FAD as cofactor.

The protein resides in the membrane. It carries out the reaction 4-hydroxybenzoate + NADH + O2 + H(+) = 3,4-dihydroxybenzoate + NAD(+) + H2O. It catalyses the reaction 4-hydroxybenzoate + NADPH + O2 + H(+) = 3,4-dihydroxybenzoate + NADP(+) + H2O. FAD-dependent monooxygenase; part of the benzoic acid degradation pathway also known as the protocatechuic acid pathway. Benzoic acid debradation begins with the conversion of benzoic acid into 4-hydroxybenzoic acid through hydroxylation by the benzoate-4-monooxygenase bphA, and its partner NADPH-cytochrome P450 reductase cprA which act as a mediator in electron donation from NADPH. 4-Hydroxybenzoic acid is then converted into 3,4-dihydroxybenzoic acid (also called protocatechuic acid) by the p-hydroxybenzoate-m-hydroxylase phhA. Protocatechuic acid is converted into 3-carboxy-cis,cis-muconic acid by the intradiol ring-cleavage dioxygenase prcA, which is further metabolized through the 3-oxoadipate pathway to finally enter the tricarboxylic acid cycle (TCA). The polypeptide is p-hydroxybenzoate-m-hydroxylase (Emericella nidulans (strain FGSC A4 / ATCC 38163 / CBS 112.46 / NRRL 194 / M139) (Aspergillus nidulans)).